The chain runs to 400 residues: Delta(12) fatty acid desaturase (400 aa).

The helical transmembrane segment at 91 to 111 (LAWPAYWIMQGIVCTGIWVLA) threads the bilayer. The Histidine box-1 signature appears at 112–116 (HECGH). The short motif at 148-152 (HSKHH) is the Histidine box-2 element. Transmembrane regions (helical) follow at residues 199 to 219 (IVTLFWMVIQFLFGWPAYLIM), 245 to 265 (FFDIIISDLGVLAALGALIYA), and 277 to 297 (YYIVPYLFVNFWLVLITFLQH). Residues 339-343 (HVAHH) carry the Histidine box-3 motif.

The protein belongs to the fatty acid desaturase type 1 family.

The protein resides in the membrane. The catalysed reaction is (9Z)-octadecenoyl-CoA + 2 Fe(II)-[cytochrome b5] + O2 + 2 H(+) = (9Z,12Z)-octadecadienoyl-CoA + 2 Fe(III)-[cytochrome b5] + 2 H2O. The enzyme catalyses (9Z)-hexadecenoyl-CoA + 2 Fe(II)-[cytochrome b5] + O2 + 2 H(+) = (9Z,12Z)-hexadecadienoyl-CoA + 2 Fe(III)-[cytochrome b5] + 2 H2O. It functions in the pathway lipid metabolism; polyunsaturated fatty acid biosynthesis. In terms of biological role, catalyzes the desaturation of oleic acid (Delta(9)-18:1) to linoleic acid (Delta(9), Delta(12)-18:2). In Mortierella alpina (Oleaginous fungus), this protein is Delta(12) fatty acid desaturase.